Reading from the N-terminus, the 512-residue chain is Kynurenine 3-monooxygenase (512 aa).

Belongs to the aromatic-ring hydroxylase family. KMO subfamily. FAD serves as cofactor.

The protein resides in the mitochondrion outer membrane. It carries out the reaction L-kynurenine + NADPH + O2 + H(+) = 3-hydroxy-L-kynurenine + NADP(+) + H2O. It participates in cofactor biosynthesis; NAD(+) biosynthesis; quinolinate from L-kynurenine: step 1/3. Functionally, catalyzes the hydroxylation of L-kynurenine (L-Kyn) to form 3-hydroxy-L-kynurenine (L-3OHKyn). Required for synthesis of quinolinic acid. The sequence is that of Kynurenine 3-monooxygenase (bna4) from Aspergillus clavatus (strain ATCC 1007 / CBS 513.65 / DSM 816 / NCTC 3887 / NRRL 1 / QM 1276 / 107).